The chain runs to 296 residues: Probable transcription factor At1g44810 (296 aa).

Positions 1–119 are disordered; that stretch reads MNKKLLNPLE…AKKVSGDDDN (119 aa). Acidic residues predominate over residues 19–28; the sequence is EDVDEEISSG. The span at 52–72 shows a compositional bias: polar residues; sequence TQTLNSPSTEAPTLDSGSETN. A compositionally biased stretch (basic and acidic residues) spans 97–119; the sequence is RASEGTSSKDIKRAKKVSGDDDN.

Belongs to the GeBP family.

The sequence is that of Probable transcription factor At1g44810 from Arabidopsis thaliana (Mouse-ear cress).